A 325-amino-acid chain; its full sequence is Beta-ketoacyl-[acyl-carrier-protein] synthase III (325 aa).

Catalysis depends on residues cysteine 119 and histidine 252. The segment at 253–257 is ACP-binding; sequence QANIR. Residue asparagine 282 is part of the active site.

Belongs to the thiolase-like superfamily. FabH family. Homodimer.

It localises to the cytoplasm. It carries out the reaction malonyl-[ACP] + acetyl-CoA + H(+) = 3-oxobutanoyl-[ACP] + CO2 + CoA. Its pathway is lipid metabolism; fatty acid biosynthesis. Its function is as follows. Catalyzes the condensation reaction of fatty acid synthesis by the addition to an acyl acceptor of two carbons from malonyl-ACP. Catalyzes the first condensation reaction which initiates fatty acid synthesis and may therefore play a role in governing the total rate of fatty acid production. Possesses both acetoacetyl-ACP synthase and acetyl transacylase activities. Its substrate specificity determines the biosynthesis of branched-chain and/or straight-chain of fatty acids. This chain is Beta-ketoacyl-[acyl-carrier-protein] synthase III, found in Variovorax paradoxus (strain S110).